A 146-amino-acid polypeptide reads, in one-letter code: Ribosome-binding factor A (146 aa).

A disordered region spans residues 122–146 (QQQFGSVDDVTENDIDEADDTEGKA). The segment covering 130–146 (DVTENDIDEADDTEGKA) has biased composition (acidic residues).

Belongs to the RbfA family. Monomer. Binds 30S ribosomal subunits, but not 50S ribosomal subunits or 70S ribosomes.

Its subcellular location is the cytoplasm. One of several proteins that assist in the late maturation steps of the functional core of the 30S ribosomal subunit. Associates with free 30S ribosomal subunits (but not with 30S subunits that are part of 70S ribosomes or polysomes). Required for efficient processing of 16S rRNA. May interact with the 5'-terminal helix region of 16S rRNA. The sequence is that of Ribosome-binding factor A from Shewanella sp. (strain MR-7).